The primary structure comprises 502 residues: Glycerol kinase (502 aa).

Residue threonine 12 participates in ADP binding. The ATP site is built by threonine 12, threonine 13, and serine 14. Threonine 12 serves as a coordination point for sn-glycerol 3-phosphate. Arginine 16 contributes to the ADP binding site. Arginine 82, glutamate 83, tyrosine 134, and aspartate 243 together coordinate sn-glycerol 3-phosphate. Residues arginine 82, glutamate 83, tyrosine 134, aspartate 243, and glutamine 244 each coordinate glycerol. Residues threonine 265 and glycine 308 each contribute to the ADP site. 4 residues coordinate ATP: threonine 265, glycine 308, glutamine 312, and glycine 412. Glycine 412 is a binding site for ADP.

The protein belongs to the FGGY kinase family.

The catalysed reaction is glycerol + ATP = sn-glycerol 3-phosphate + ADP + H(+). It functions in the pathway polyol metabolism; glycerol degradation via glycerol kinase pathway; sn-glycerol 3-phosphate from glycerol: step 1/1. Inhibited by fructose 1,6-bisphosphate (FBP). Functionally, key enzyme in the regulation of glycerol uptake and metabolism. Catalyzes the phosphorylation of glycerol to yield sn-glycerol 3-phosphate. The chain is Glycerol kinase from Methylobacterium nodulans (strain LMG 21967 / CNCM I-2342 / ORS 2060).